The sequence spans 240 residues: UDP-2,3-diacylglucosamine hydrolase (240 aa).

Mn(2+) is bound by residues D7, H9, D40, N78, and H113. 78–79 (NR) serves as a coordination point for substrate. Substrate is bound by residues D121, S159, T163, K166, and H194. Mn(2+) contacts are provided by H194 and H196.

It belongs to the LpxH family. The cofactor is Mn(2+).

The protein resides in the cell inner membrane. The catalysed reaction is UDP-2-N,3-O-bis[(3R)-3-hydroxytetradecanoyl]-alpha-D-glucosamine + H2O = 2-N,3-O-bis[(3R)-3-hydroxytetradecanoyl]-alpha-D-glucosaminyl 1-phosphate + UMP + 2 H(+). It functions in the pathway glycolipid biosynthesis; lipid IV(A) biosynthesis; lipid IV(A) from (3R)-3-hydroxytetradecanoyl-[acyl-carrier-protein] and UDP-N-acetyl-alpha-D-glucosamine: step 4/6. Its function is as follows. Hydrolyzes the pyrophosphate bond of UDP-2,3-diacylglucosamine to yield 2,3-diacylglucosamine 1-phosphate (lipid X) and UMP by catalyzing the attack of water at the alpha-P atom. Involved in the biosynthesis of lipid A, a phosphorylated glycolipid that anchors the lipopolysaccharide to the outer membrane of the cell. The polypeptide is UDP-2,3-diacylglucosamine hydrolase (Pseudomonas putida (strain W619)).